The sequence spans 151 residues: Large ribosomal subunit protein uL30 (151 aa).

Belongs to the universal ribosomal protein uL30 family. Part of the 50S ribosomal subunit.

The polypeptide is Large ribosomal subunit protein uL30 (Methanothrix thermoacetophila (strain DSM 6194 / JCM 14653 / NBRC 101360 / PT) (Methanosaeta thermophila)).